Consider the following 232-residue polypeptide: Ribose-5-phosphate isomerase A (232 aa).

Substrate-binding positions include 31-34, 87-90, and 100-103; these read TGST, DGAD, and KGGG. Glu-109 functions as the Proton acceptor in the catalytic mechanism. Lys-127 provides a ligand contact to substrate.

It belongs to the ribose 5-phosphate isomerase family. As to quaternary structure, homodimer.

It catalyses the reaction aldehydo-D-ribose 5-phosphate = D-ribulose 5-phosphate. It functions in the pathway carbohydrate degradation; pentose phosphate pathway; D-ribose 5-phosphate from D-ribulose 5-phosphate (non-oxidative stage): step 1/1. In terms of biological role, catalyzes the reversible conversion of ribose-5-phosphate to ribulose 5-phosphate. This is Ribose-5-phosphate isomerase A from Bifidobacterium adolescentis (strain ATCC 15703 / DSM 20083 / NCTC 11814 / E194a).